The sequence spans 588 residues: Histone-arginine methyltransferase CARM1 (588 aa).

The SAM-dependent MTase PRMT-type domain occupies 120-427 (AVQYFQFYGY…KRQSYDISIV (308 aa)). S-adenosyl-L-methionine-binding residues include glutamine 133, arginine 142, glycine 166, glutamate 188, glutamate 217, and serine 245. The tract at residues 473 to 588 (TGGTYSMSQG…IPSNTMHYGS (116 aa)) is transactivation domain.

The protein belongs to the class I-like SAM-binding methyltransferase superfamily. Protein arginine N-methyltransferase family. In terms of assembly, homodimer.

The protein localises to the nucleus. The protein resides in the cytoplasm. It is found in the chromosome. It carries out the reaction L-arginyl-[protein] + 2 S-adenosyl-L-methionine = N(omega),N(omega)-dimethyl-L-arginyl-[protein] + 2 S-adenosyl-L-homocysteine + 2 H(+). In terms of biological role, methylates (mono- and asymmetric dimethylation) the guanidino nitrogens of arginyl residues in several proteins involved in DNA packaging, transcription regulation, pre-mRNA splicing, and mRNA stability. Recruited to promoters upon gene activation together with histone acetyltransferases from EP300/P300 and p160 families, methylates histone H3 at 'Arg-17' (H3R17me) and activates transcription via chromatin remodeling. The polypeptide is Histone-arginine methyltransferase CARM1 (carm1) (Danio rerio (Zebrafish)).